Reading from the N-terminus, the 158-residue chain is NADH-quinone oxidoreductase subunit B 1 (158 aa).

Residues C37, C38, C102, and C132 each contribute to the [4Fe-4S] cluster site.

The protein belongs to the complex I 20 kDa subunit family. NDH-1 is composed of 14 different subunits. Subunits NuoB, C, D, E, F, and G constitute the peripheral sector of the complex. The cofactor is [4Fe-4S] cluster.

Its subcellular location is the cell inner membrane. The catalysed reaction is a quinone + NADH + 5 H(+)(in) = a quinol + NAD(+) + 4 H(+)(out). Its function is as follows. NDH-1 shuttles electrons from NADH, via FMN and iron-sulfur (Fe-S) centers, to quinones in the respiratory chain. Couples the redox reaction to proton translocation (for every two electrons transferred, four hydrogen ions are translocated across the cytoplasmic membrane), and thus conserves the redox energy in a proton gradient. The sequence is that of NADH-quinone oxidoreductase subunit B 1 from Azoarcus sp. (strain BH72).